The sequence spans 836 residues: Granulocyte colony-stimulating factor receptor (836 aa).

An N-terminal signal peptide occupies residues 1 to 24 (MARLGNCSLTWAALIILLLPGSLE). Positions 25–117 (ECGHISVSAP…SLQILDQVEL (93 aa)) constitute an Ig-like C2-type domain. At 25 to 627 (ECGHISVSAP…TLTPEGSELH (603 aa)) the chain is on the extracellular side. Disulfide bonds link Cys-26–Cys-52 and Cys-46–Cys-101. 4 N-linked (GlcNAc...) asparagine glycosylation sites follow: Asn-51, Asn-93, Asn-128, and Asn-134. 5 Fibronectin type-III domains span residues 125-230 (IPHN…LEPP), 233-332 (RTMD…TTER), 334-430 (PTVR…SRGP), 431-528 (ALTR…MAPS), and 530-623 (APEL…TPEG). 5 disulfides stabilise this stretch: Cys-131–Cys-142, Cys-167–Cys-218, Cys-177–Cys-186, Cys-248–Cys-295, and Cys-266–Cys-309. The short motif at 318 to 322 (WSDWS) is the WSXWS motif element. 4 N-linked (GlcNAc...) asparagine glycosylation sites follow: Asn-389, Asn-474, Asn-579, and Asn-610. A helical transmembrane segment spans residues 628–650 (IILGLFGLLLLLTCLCGTAWLCC). Over 651–836 (SPNRKNPLWP…VHGMEALGSF (186 aa)) the chain is Cytoplasmic. The short motif at 658-666 (LWPSVPDPA) is the Box 1 motif element.

The protein belongs to the type I cytokine receptor family. Type 2 subfamily. Homodimer. The dimeric receptor binds two CSF3 molecules. Interacts with CEACAM1; down-regulates the CSF3R-STAT3 pathway through recruitment of PTPN6 that dephosphorylates CSF3R. N-glycosylated. In terms of tissue distribution, one or several isoforms have been found in myelogenous leukemia cell line KG-1, leukemia U-937 cell line, in bone marrow cells, placenta, and peripheral blood granulocytes. Isoform GCSFR-2 is found only in leukemia U-937 cells. Isoform GCSFR-3 is highly expressed in placenta.

The protein resides in the secreted. It is found in the cell membrane. Functionally, receptor for granulocyte colony-stimulating factor (CSF3), essential for granulocytic maturation. Plays a crucial role in the proliferation, differentiation and survival of cells along the neutrophilic lineage. In addition it may function in some adhesion or recognition events at the cell surface. This is Granulocyte colony-stimulating factor receptor (CSF3R) from Homo sapiens (Human).